The primary structure comprises 140 residues: RxLR effector protein Avh23 (140 aa).

The N-terminal stretch at 1 to 21 (MRLTYFLTVIVVATLHAGGTA) is a signal peptide. Residues 54–72 (RMLRKVKEDTVSKKDHEER) carry the RxLR-dEER motif. The stretch at 100–113 (QGAFQRQNAFVNRD) is one ADA2-binding IR1 repeat. The stretch at 114–127 (QGAFQRQNAFVKRA) is one ADA2-binding IR2 repeat.

The protein belongs to the RxLR effector family. In terms of assembly, interacts with host histone acetyl transferase SAGA complex subunit ADA2.

The protein localises to the secreted. Its subcellular location is the host nucleus. It is found in the host cytoplasm. Its function is as follows. Effector that suppresses plant defense responses during the early stages of pathogen infection. Suppresses cell death induced by effectors and PAMPs in plant hosts. Acts as a modulator of histone acetyltransferase (HAT) in plants. Avh23 binds to the ADA2 subunit of the HAT complex SAGA and disrupts its assembly by interfering with the association of ADA2 with the catalytic subunit GCN5. As such, Avh23 suppresses H3K9 acetylation mediated by the ADA2/GCN5 module and increases plant susceptibility. The polypeptide is RxLR effector protein Avh23 (Phytophthora sojae (Soybean stem and root rot agent)).